The sequence spans 93 residues: Islet amyloid polypeptide (93 aa).

The signal sequence occupies residues 1-23; it reads MMCISKLPAVLLILSVALNHLRA. Positions 24–35 are excised as a propeptide; sequence TPVRSGSNPQMD. Cys39 and Cys44 are joined by a disulfide. Positions 64–93 are disordered; it reads LPPTNVGSNTYGKRNAAGDPNRESLDFLLV. At Tyr74 the chain carries Tyrosine amide. Residues 78-93 constitute a propeptide that is removed on maturation; that stretch reads NAAGDPNRESLDFLLV. Basic and acidic residues predominate over residues 83–93; the sequence is PNRESLDFLLV.

The protein belongs to the calcitonin family. As to quaternary structure, can form homodimers. Interacts with IDE and INS. Interaction with INS inhibits homodimerization and fibril formation.

The protein localises to the secreted. Its function is as follows. Amylin/IAPP is a glucoregulatory peptide hormone that plays an important role in the regulation of energy homeostasis. Selectively inhibits insulin-stimulated glucose utilization and glycogen deposition in muscle, while not affecting adipocyte glucose metabolism. IAPP function is mediated by the CALCR-RAMPs (AMYRs) receptor complexes. Amylin can also bind CALCR receptor in the absence of RAMPs, although it is more selective for AMYRs. This Mus musculus (Mouse) protein is Islet amyloid polypeptide.